The following is a 266-amino-acid chain: Ribosome-recycling factor, chloroplastic (266 aa).

Low complexity predominate over residues 1 to 26 (MPPLHAVSPAAAAAPPRALSSAARVP). Residues 1–30 (MPPLHAVSPAAAAAPPRALSSAARVPQRPG) form a disordered region. Residues 1-74 (MPPLHAVSPA…SDKRAVLRHA (74 aa)) constitute a chloroplast transit peptide. Coiled coils occupy residues 75-109 (TIEE…NTVR) and 207-266 (VAIR…LMKI).

It belongs to the RRF family.

It is found in the plastid. The protein resides in the chloroplast. In terms of biological role, responsible for the release of ribosomes from messenger RNA at the termination of chloroplastic protein biosynthesis. This chain is Ribosome-recycling factor, chloroplastic, found in Oryza sativa subsp. indica (Rice).